Consider the following 443-residue polypeptide: Probable glutamate dehydrogenase (443 aa).

K86 is a catalytic residue.

It belongs to the Glu/Leu/Phe/Val dehydrogenases family.

It carries out the reaction L-glutamate + NAD(+) + H2O = 2-oxoglutarate + NH4(+) + NADH + H(+). It catalyses the reaction L-glutamate + NADP(+) + H2O = 2-oxoglutarate + NH4(+) + NADPH + H(+). The protein is Probable glutamate dehydrogenase of Sinorhizobium fredii (strain NBRC 101917 / NGR234).